Consider the following 149-residue polypeptide: Pleckstrin homology domain-containing family J member 1 (149 aa).

In terms of domain architecture, PH spans 15–108; that stretch reads RAEKAAELGM…WVEALTNASY (94 aa).

The protein is Pleckstrin homology domain-containing family J member 1 (plekhj1) of Xenopus laevis (African clawed frog).